Reading from the N-terminus, the 450-residue chain is Glucose-6-phosphate isomerase (450 aa).

Phosphothreonine is present on Thr39. Glu291 (proton donor) is an active-site residue. Residues His312 and Lys426 contribute to the active site.

It belongs to the GPI family.

It is found in the cytoplasm. The enzyme catalyses alpha-D-glucose 6-phosphate = beta-D-fructose 6-phosphate. It participates in carbohydrate biosynthesis; gluconeogenesis. It functions in the pathway carbohydrate degradation; glycolysis; D-glyceraldehyde 3-phosphate and glycerone phosphate from D-glucose: step 2/4. In terms of biological role, catalyzes the reversible isomerization of glucose-6-phosphate to fructose-6-phosphate. The sequence is that of Glucose-6-phosphate isomerase from Bacillus thuringiensis (strain Al Hakam).